The chain runs to 214 residues: MSSAVLADHVERQLDELGWETSHIVGNSLGGWVAFELERRGRARSVTGIAPAGGWTRWSPVKFEVIAKFIAGAPILAVAHILGQRALRLPFSRLLATLPISATPDGVSERELSGIIDDAAHCPAYFQLLVKALVLPGLQELEHTAVPSHVVLCEQDRVVPPSRFSRHFTDSLPAGHRLTVLDGVGHVPMFEAPGRITELITSFIEECCPHVRAS.

Serine 28 serves as the catalytic Nucleophile. Catalysis depends on charge relay system residues aspartate 156 and histidine 186.

Belongs to the AB hydrolase superfamily.

The enzyme catalyses an epoxide + H2O = an ethanediol. With respect to regulation, inhibited by AUDA, a known epoxide hydrolase inhibitor. Catalyzes the hydrolysis of epoxide-containing substrates. In vitro, catalyzes the hydrolysis of the synthetic compounds PHOME and styrene oxide. Plays an essential role in subverting phagosomal acidification. Plays a major role in the survival of M.tuberculosis (Mtb) during in vitro acidic stress and protects Mtb in response to phagosomal acidification inside macrophages. Also supports Mtb growth under the nutrient-deprived condition at pH 7.0. In Mycobacterium tuberculosis (strain ATCC 25618 / H37Rv), this protein is Epoxide hydrolase EphH.